The following is a 175-amino-acid chain: Large ribosomal subunit protein uL10 (175 aa).

The protein belongs to the universal ribosomal protein uL10 family. In terms of assembly, part of the ribosomal stalk of the 50S ribosomal subunit. The N-terminus interacts with L11 and the large rRNA to form the base of the stalk. The C-terminus forms an elongated spine to which L12 dimers bind in a sequential fashion forming a multimeric L10(L12)X complex.

Functionally, forms part of the ribosomal stalk, playing a central role in the interaction of the ribosome with GTP-bound translation factors. In Thermobifida fusca (strain YX), this protein is Large ribosomal subunit protein uL10.